The following is a 644-amino-acid chain: Chaperone protein DnaK (644 aa).

Thr-199 bears the Phosphothreonine; by autocatalysis mark. Residues 589-644 (QALAEASHKLAEKMYSQGQGPQAGPGEEPSGQSGGTEKPVEGEVVDAEFEEVKNKK) are disordered. Residues 604–619 (SQGQGPQAGPGEEPSG) are compositionally biased toward low complexity.

It belongs to the heat shock protein 70 family.

Its function is as follows. Acts as a chaperone. The protein is Chaperone protein DnaK of Nitrosospira multiformis (strain ATCC 25196 / NCIMB 11849 / C 71).